The following is a 279-amino-acid chain: Protein BASIC PENTACYSTEINE2 (279 aa).

Positions 126-167 (TKKRKTNAKAGSTPKAKKPRKPKDENSNNNNNNNTNVTRVKP) are disordered. A compositionally biased stretch (low complexity) spans 152-161 (SNNNNNNNTN).

The protein belongs to the BBR/BPC family. As to expression, expressed in seedlings, leaves and pistils. Detected in the base of flowers and tips of carpels, in sepal and petal vasculature, in pollen grains, in young rosette, in the lateral and tip of primary roots, and in ovule at the exception of the outer integument.

It localises to the nucleus. Functionally, transcriptional regulator that specifically binds to GA-rich elements (GAGA-repeats) present in regulatory sequences of genes involved in developmental processes. The polypeptide is Protein BASIC PENTACYSTEINE2 (Arabidopsis thaliana (Mouse-ear cress)).